Consider the following 616-residue polypeptide: Chaperone protein HscA homolog (616 aa).

The protein belongs to the heat shock protein 70 family.

Chaperone involved in the maturation of iron-sulfur cluster-containing proteins. Has a low intrinsic ATPase activity which is markedly stimulated by HscB. This chain is Chaperone protein HscA homolog, found in Histophilus somni (strain 2336) (Haemophilus somnus).